The chain runs to 1177 residues: Lon protease homolog, mitochondrial (1177 aa).

Disordered regions lie at residues R72–A197 and A353–T386. Over residues R103–K150 the composition is skewed to basic and acidic residues. The segment covering T154–S182 has biased composition (low complexity). Residues I203–H505 form the Lon N-terminal domain. Residues A353–D383 show a composition bias toward basic and acidic residues. G657–T664 provides a ligand contact to ATP. Basic and acidic residues predominate over residues E883 to E916. The disordered stretch occupies residues E883–V932. One can recognise a Lon proteolytic domain in the interval D964 to G1150. Catalysis depends on residues S1056 and K1099.

The protein belongs to the peptidase S16 family. In terms of assembly, homohexamer or homoheptamer. Organized in a ring with a central cavity.

The protein resides in the mitochondrion matrix. The catalysed reaction is Hydrolysis of proteins in presence of ATP.. ATP-dependent serine protease that mediates the selective degradation of misfolded, unassembled or oxidatively damaged polypeptides as well as certain short-lived regulatory proteins in the mitochondrial matrix. May also have a chaperone function in the assembly of inner membrane protein complexes. Participates in the regulation of mitochondrial gene expression and in the maintenance of the integrity of the mitochondrial genome. Binds to mitochondrial DNA in a site-specific manner. This chain is Lon protease homolog, mitochondrial, found in Yarrowia lipolytica (strain CLIB 122 / E 150) (Yeast).